The following is a 448-amino-acid chain: MAKKTSLFECQHCGFTSPKWLGKCVQCNAWESFIELNQAQKEVLNTLKKPIPQAQKSVSIAAIEHEEVIKFSSTQSELDIVLGGGIAKGGLYLVGGSPGVGKSTLLLKVASGLAKNQQKVLYVSGEESLSQIKMRAIRLDCIEKELYLLNEINWPVIKANIESENYFACVIDSIQTLYSPEISSAPGSISQVREITFELMRLAKTRDIAIFIIGHITKEGSIAGPRVLEHMVDSVLYFEGDPSRELRILRSFKNRFGPTSEIGLFEMKEQGLVSAKEASSLFFSKEEPMEGSAITITLEGSRALILEIQALVSECSFGSPKRLANGFDTNRLNMLIALLEKKLEIPLNRHDVFINVSGGIKISEPACDLAVIASILSSFKNRKIDNKTAFLGEVSLNGRILEAPNLNARLKEMENYGFLKAILPKKPSQKTSIKCYEANAVGKIVEWM.

The C4-type zinc finger occupies 10 to 27 (CQHCGFTSPKWLGKCVQC). 96–103 (GSPGVGKS) contributes to the ATP binding site. The RadA KNRFG motif motif lies at 253–257 (KNRFG). The interval 351–448 (DVFINVSGGI…NAVGKIVEWM (98 aa)) is lon-protease-like.

The protein belongs to the RecA family. RadA subfamily.

In terms of biological role, DNA-dependent ATPase involved in processing of recombination intermediates, plays a role in repairing DNA breaks. Stimulates the branch migration of RecA-mediated strand transfer reactions, allowing the 3' invading strand to extend heteroduplex DNA faster. Binds ssDNA in the presence of ADP but not other nucleotides, has ATPase activity that is stimulated by ssDNA and various branched DNA structures, but inhibited by SSB. Does not have RecA's homology-searching function. The protein is DNA repair protein RadA of Helicobacter pylori (strain ATCC 700392 / 26695) (Campylobacter pylori).